The primary structure comprises 419 residues: Multifunctional CCA protein (419 aa).

Residues G8 and R11 each coordinate ATP. Positions 8 and 11 each coordinate CTP. The Mg(2+) site is built by D21 and D23. Residues R91, R149, and R152 each coordinate ATP. CTP-binding residues include R91, R149, and R152. The region spanning 238–339 (CGVHLMMVID…VRLLERCDAF (102 aa)) is the HD domain.

This sequence belongs to the tRNA nucleotidyltransferase/poly(A) polymerase family. Bacterial CCA-adding enzyme type 1 subfamily. As to quaternary structure, monomer. Can also form homodimers and oligomers. It depends on Mg(2+) as a cofactor. Requires Ni(2+) as cofactor.

It catalyses the reaction a tRNA precursor + 2 CTP + ATP = a tRNA with a 3' CCA end + 3 diphosphate. The catalysed reaction is a tRNA with a 3' CCA end + 2 CTP + ATP = a tRNA with a 3' CCACCA end + 3 diphosphate. Its function is as follows. Catalyzes the addition and repair of the essential 3'-terminal CCA sequence in tRNAs without using a nucleic acid template. Adds these three nucleotides in the order of C, C, and A to the tRNA nucleotide-73, using CTP and ATP as substrates and producing inorganic pyrophosphate. tRNA 3'-terminal CCA addition is required both for tRNA processing and repair. Also involved in tRNA surveillance by mediating tandem CCA addition to generate a CCACCA at the 3' terminus of unstable tRNAs. While stable tRNAs receive only 3'-terminal CCA, unstable tRNAs are marked with CCACCA and rapidly degraded. The polypeptide is Multifunctional CCA protein (Variovorax paradoxus (strain S110)).